A 263-amino-acid polypeptide reads, in one-letter code: MLTFPRIDPVAITLGPLQFRWYGLMYLFGFLSGWWLGRRRAAQPGSRWTGEMVDDMVTYVILGVVLGGRIGYILFYDLAYYLSNPTQIFSIWNGGMSFHGGLLGVVFAMWLLGRRNGLGFMDVSDFVAPLIPPGLFFGRIGNFINGELWGKHTTLPWGMVFPDGGPFPRHPSQLYECALEGVILFLALWVFSSRKRPTGHVSGLFALLYGVFRFTVEFVREPDVQLGYLAFGWLTMGQVLCLPLIMLGLWLLRPGGDKGTKAA.

Helical transmembrane passes span 10–30, 56–76, 91–111, and 117–137; these read VAIT…LFGF, MVTY…ILFY, IWNG…AMWL, and GLGF…GLFF. Residue Arg139 coordinates a 1,2-diacyl-sn-glycero-3-phospho-(1'-sn-glycerol). The next 3 membrane-spanning stretches (helical) occupy residues 171-191, 199-219, and 231-251; these read PSQL…LWVF, GHVS…VEFV, and FGWL…GLWL.

The protein belongs to the Lgt family.

It is found in the cell inner membrane. It carries out the reaction L-cysteinyl-[prolipoprotein] + a 1,2-diacyl-sn-glycero-3-phospho-(1'-sn-glycerol) = an S-1,2-diacyl-sn-glyceryl-L-cysteinyl-[prolipoprotein] + sn-glycerol 1-phosphate + H(+). The protein operates within protein modification; lipoprotein biosynthesis (diacylglyceryl transfer). Functionally, catalyzes the transfer of the diacylglyceryl group from phosphatidylglycerol to the sulfhydryl group of the N-terminal cysteine of a prolipoprotein, the first step in the formation of mature lipoproteins. The sequence is that of Phosphatidylglycerol--prolipoprotein diacylglyceryl transferase from Nitratidesulfovibrio vulgaris (strain DP4) (Desulfovibrio vulgaris).